The primary structure comprises 63 residues: Large ribosomal subunit protein bL28 (63 aa).

It belongs to the bacterial ribosomal protein bL28 family.

This is Large ribosomal subunit protein bL28 from Geobacter metallireducens (strain ATCC 53774 / DSM 7210 / GS-15).